Here is a 140-residue protein sequence, read N- to C-terminus: ATP synthase epsilon chain (140 aa).

The protein belongs to the ATPase epsilon chain family. F-type ATPases have 2 components, CF(1) - the catalytic core - and CF(0) - the membrane proton channel. CF(1) has five subunits: alpha(3), beta(3), gamma(1), delta(1), epsilon(1). CF(0) has three main subunits: a, b and c.

It is found in the cell membrane. Produces ATP from ADP in the presence of a proton gradient across the membrane. This is ATP synthase epsilon chain from Baumannia cicadellinicola subsp. Homalodisca coagulata.